The primary structure comprises 351 residues: tRNA-specific 2-thiouridylase MnmA 2 (351 aa).

ATP-binding positions include 13 to 20 (GMSGGTDS) and Phe-39. The Nucleophile role is filled by Cys-98. Cys-98 and Cys-195 are disulfide-bonded. ATP is bound at residue Gly-122. The tract at residues 144-146 (KDQ) is interaction with tRNA. Cys-195 (cysteine persulfide intermediate) is an active-site residue. Residues 301 to 302 (RY) are interaction with tRNA.

This sequence belongs to the MnmA/TRMU family.

It localises to the cytoplasm. It catalyses the reaction S-sulfanyl-L-cysteinyl-[protein] + uridine(34) in tRNA + AH2 + ATP = 2-thiouridine(34) in tRNA + L-cysteinyl-[protein] + A + AMP + diphosphate + H(+). Catalyzes the 2-thiolation of uridine at the wobble position (U34) of tRNA, leading to the formation of s(2)U34. The polypeptide is tRNA-specific 2-thiouridylase MnmA 2 (Phocaeicola vulgatus (strain ATCC 8482 / DSM 1447 / JCM 5826 / CCUG 4940 / NBRC 14291 / NCTC 11154) (Bacteroides vulgatus)).